The sequence spans 343 residues: Tetraacyldisaccharide 4'-kinase (343 aa).

58-65 (VAGGAGKT) serves as a coordination point for ATP.

Belongs to the LpxK family.

The enzyme catalyses a lipid A disaccharide + ATP = a lipid IVA + ADP + H(+). The protein operates within glycolipid biosynthesis; lipid IV(A) biosynthesis; lipid IV(A) from (3R)-3-hydroxytetradecanoyl-[acyl-carrier-protein] and UDP-N-acetyl-alpha-D-glucosamine: step 6/6. Its function is as follows. Transfers the gamma-phosphate of ATP to the 4'-position of a tetraacyldisaccharide 1-phosphate intermediate (termed DS-1-P) to form tetraacyldisaccharide 1,4'-bis-phosphate (lipid IVA). This is Tetraacyldisaccharide 4'-kinase from Polaromonas naphthalenivorans (strain CJ2).